A 431-amino-acid chain; its full sequence is tRNA(Ile)-lysidine synthase (431 aa).

An ATP-binding site is contributed by Ser-19–Ser-24.

It belongs to the tRNA(Ile)-lysidine synthase family.

The protein localises to the cytoplasm. It catalyses the reaction cytidine(34) in tRNA(Ile2) + L-lysine + ATP = lysidine(34) in tRNA(Ile2) + AMP + diphosphate + H(+). Its function is as follows. Ligates lysine onto the cytidine present at position 34 of the AUA codon-specific tRNA(Ile) that contains the anticodon CAU, in an ATP-dependent manner. Cytidine is converted to lysidine, thus changing the amino acid specificity of the tRNA from methionine to isoleucine. The chain is tRNA(Ile)-lysidine synthase from Staphylococcus aureus (strain MW2).